We begin with the raw amino-acid sequence, 359 residues long: 3-dehydroquinate synthase (359 aa).

Belongs to the archaeal-type DHQ synthase family.

It catalyses the reaction 2-amino-2,3,7-trideoxy-D-lyxo-hept-6-ulosonate + NAD(+) + H2O = 3-dehydroquinate + NH4(+) + NADH + H(+). Its function is as follows. Catalyzes the oxidative deamination and cyclization of 2-amino-3,7-dideoxy-D-threo-hept-6-ulosonic acid (ADH) to yield 3-dehydroquinate (DHQ), which is fed into the canonical shikimic pathway of aromatic amino acid biosynthesis. The protein is 3-dehydroquinate synthase of Methanosphaera stadtmanae (strain ATCC 43021 / DSM 3091 / JCM 11832 / MCB-3).